The chain runs to 717 residues: Glutamate--cysteine ligase (717 aa).

The segment at 484 to 576 (SKTTEQRAAK…TDSDHTDTDD (93 aa)) is disordered. 2 stretches are compositionally biased toward low complexity: residues 492–518 (AKAQ…NGNG) and 551–567 (GTTN…SNGT).

It belongs to the glutamate--cysteine ligase type 3 family.

It catalyses the reaction L-cysteine + L-glutamate + ATP = gamma-L-glutamyl-L-cysteine + ADP + phosphate + H(+). The catalysed reaction is (2S)-2-aminobutanoate + L-glutamate + ATP = gamma-L-glutamyl-(2S)-2-aminobutanoate + ADP + phosphate + H(+). It functions in the pathway sulfur metabolism; glutathione biosynthesis; glutathione from L-cysteine and L-glutamate: step 1/2. Its function is as follows. Catalyzes the ATP-dependent ligation of L-glutamate and L-cysteine and participates in the first and rate-limiting step in glutathione biosynthesis. The chain is Glutamate--cysteine ligase from Drosophila melanogaster (Fruit fly).